Here is a 338-residue protein sequence, read N- to C-terminus: 3-dehydroquinate synthase (338 aa).

Residues 58–63 (DGERAK), 92–96 (GTTGD), 116–117 (TT), Lys-129, and Lys-138 contribute to the NAD(+) site. Residues Glu-169, His-229, and His-245 each coordinate Zn(2+).

This sequence belongs to the sugar phosphate cyclases superfamily. Dehydroquinate synthase family. Requires NAD(+) as cofactor. The cofactor is Co(2+). It depends on Zn(2+) as a cofactor.

It is found in the cytoplasm. The enzyme catalyses 7-phospho-2-dehydro-3-deoxy-D-arabino-heptonate = 3-dehydroquinate + phosphate. It participates in metabolic intermediate biosynthesis; chorismate biosynthesis; chorismate from D-erythrose 4-phosphate and phosphoenolpyruvate: step 2/7. In terms of biological role, catalyzes the conversion of 3-deoxy-D-arabino-heptulosonate 7-phosphate (DAHP) to dehydroquinate (DHQ). In Picrophilus torridus (strain ATCC 700027 / DSM 9790 / JCM 10055 / NBRC 100828 / KAW 2/3), this protein is 3-dehydroquinate synthase.